Here is a 419-residue protein sequence, read N- to C-terminus: UDP-N-acetylglucosamine 1-carboxyvinyltransferase (419 aa).

22-23 (KN) lines the phosphoenolpyruvate pocket. R95 is a UDP-N-acetyl-alpha-D-glucosamine binding site. The active-site Proton donor is C119. At C119 the chain carries 2-(S-cysteinyl)pyruvic acid O-phosphothioketal. UDP-N-acetyl-alpha-D-glucosamine is bound by residues 164 to 167 (KVSV), D308, and I330.

The protein belongs to the EPSP synthase family. MurA subfamily.

The protein localises to the cytoplasm. It carries out the reaction phosphoenolpyruvate + UDP-N-acetyl-alpha-D-glucosamine = UDP-N-acetyl-3-O-(1-carboxyvinyl)-alpha-D-glucosamine + phosphate. It functions in the pathway cell wall biogenesis; peptidoglycan biosynthesis. Cell wall formation. Adds enolpyruvyl to UDP-N-acetylglucosamine. The sequence is that of UDP-N-acetylglucosamine 1-carboxyvinyltransferase from Rickettsia conorii (strain ATCC VR-613 / Malish 7).